Reading from the N-terminus, the 1118-residue chain is MCIVKTLHLITHVMKEYNSQFTEGSDFSLIEEQILEFWKENNIFKKSIENRDEKRRFVFYDGPPFANGLPHYGHLLTGFIKDTVARYKTMAGFRVDRRFGWDCHGLPAEMLAEKELGVSGKLAIEEFGIEKFNNYCRNSVMKFSREWKQYIDRQSRWVDFENDYKTMNLSFMESIMWSFYQLWQKGLIYESIKIVPYSWACQTPLSNFETRIDNAYRQKTSKTVTLAFELLDAPKSLIVDNITAYKILVWTTTPWTLPCNLALAISPNIKYCGAIINKEMYIFSRAYLKNFEDHCKKNNIEYLIHSDDICYLSLEYLSYKPVFNYFIDIKNAFKVLVADFVVEDEGTGIVHMAPGFGEDDFILCKKQGIPDIDDKDTSKLLATICPIDDGGKFTERISDFVNMHVFDTNDQIISILKAKNLCFKTDQYLHNYPHCWRTDTPLIYRAMSSWYVEVTKIKNRMIDLNKDVNWIPSHIRSGQFGKWLENAKDWAISRNRFWGTPLPVWKSDNPNYPRIDVYGSIKKVFDDIKALEEDFDIPIDDLHRPYIDNLVRPNPDDPTGKSMMRRVTDVFDCWFESGSMPYAQLHYPFENKELFENYFPADFITEYVAQTRGWFYTLFVLSTALFDKPPFKNCICHGVVLDTQGQKLSKRLNNYADPMEIFKQYGSDAMRFLMLSHTVSYGGDLLLDKDGVMVRDVIRNVIKPMWNSYNFFTIYADIDKVSARVISDLDEVDNIMDKYIMCECISTIQSIFNAMEEFDQSVGNYGYNIKAACNSIVQFFEVLNNWYIRRCRSRFWSSEITKDKVNAYNTLYTVMYYMVKVSAPFLPAITEAIWQKLNFQEEESVHLSLLPNIEHITLKDEDQKNIQYMKLIINICGCVLSIRNVRNIRVRQPLNKITIYSYNNNNDLFNLPVKYQNILLDEINVKSIVFKSNIEDIASFQLKLNFPELGKRIPEKMKNLISLLKSNQWKVLENGQLMLGIREGEYYILEDNEYTLNLKVHSEFASTITLGPNLLGVLVLDNTLTDELIMEGIARDIVRIIQQSRKDNKFNVSDKIDVVICTQDKMVKNSVQAWYEYIVQQTLSLSLVIHENLDANNVAEYCKTTMKDRNLTLFIKKL.

The 'HIGH' region signature appears at 64-74 (PFANGLPHYGH). The 'KMSKS' region signature appears at 647 to 651 (KLSKR). Residue lysine 650 coordinates ATP.

Belongs to the class-I aminoacyl-tRNA synthetase family. IleS type 2 subfamily. As to quaternary structure, monomer. The cofactor is Zn(2+).

It localises to the cytoplasm. The catalysed reaction is tRNA(Ile) + L-isoleucine + ATP = L-isoleucyl-tRNA(Ile) + AMP + diphosphate. In terms of biological role, catalyzes the attachment of isoleucine to tRNA(Ile). As IleRS can inadvertently accommodate and process structurally similar amino acids such as valine, to avoid such errors it has two additional distinct tRNA(Ile)-dependent editing activities. One activity is designated as 'pretransfer' editing and involves the hydrolysis of activated Val-AMP. The other activity is designated 'posttransfer' editing and involves deacylation of mischarged Val-tRNA(Ile). In Ehrlichia ruminantium (strain Gardel), this protein is Isoleucine--tRNA ligase.